Reading from the N-terminus, the 95-residue chain is Citrate lyase acyl carrier protein (95 aa).

At Ser-14 the chain carries O-(phosphoribosyl dephospho-coenzyme A)serine.

Belongs to the CitD family. As to quaternary structure, oligomer with a subunit composition of (alpha,beta,gamma)6.

It is found in the cytoplasm. Its function is as follows. Covalent carrier of the coenzyme of citrate lyase. In Haemophilus influenzae (strain PittEE), this protein is Citrate lyase acyl carrier protein.